Reading from the N-terminus, the 204-residue chain is Holliday junction branch migration complex subunit RuvA (204 aa).

The interval 1–64 (MIGRLQGILL…EDAHLLFGFA (64 aa)) is domain I. The domain II stretch occupies residues 65 to 143 (QKTDRTLFRE…GVKQSDFFVE (79 aa)). The segment at 144–155 (STHIPLSPSIES) is flexible linker. Positions 156–204 (HSESSSDEAISALIALGYKPVEAEKMVKRVAKPELTSEQVIREALKVAL) are domain III.

It belongs to the RuvA family. As to quaternary structure, homotetramer. Forms an RuvA(8)-RuvB(12)-Holliday junction (HJ) complex. HJ DNA is sandwiched between 2 RuvA tetramers; dsDNA enters through RuvA and exits via RuvB. An RuvB hexamer assembles on each DNA strand where it exits the tetramer. Each RuvB hexamer is contacted by two RuvA subunits (via domain III) on 2 adjacent RuvB subunits; this complex drives branch migration. In the full resolvosome a probable DNA-RuvA(4)-RuvB(12)-RuvC(2) complex forms which resolves the HJ.

Its subcellular location is the cytoplasm. Functionally, the RuvA-RuvB-RuvC complex processes Holliday junction (HJ) DNA during genetic recombination and DNA repair, while the RuvA-RuvB complex plays an important role in the rescue of blocked DNA replication forks via replication fork reversal (RFR). RuvA specifically binds to HJ cruciform DNA, conferring on it an open structure. The RuvB hexamer acts as an ATP-dependent pump, pulling dsDNA into and through the RuvAB complex. HJ branch migration allows RuvC to scan DNA until it finds its consensus sequence, where it cleaves and resolves the cruciform DNA. This Haemophilus influenzae (strain ATCC 51907 / DSM 11121 / KW20 / Rd) protein is Holliday junction branch migration complex subunit RuvA.